The primary structure comprises 163 residues: LHHSKHHATYVKGVNDAVAKLQEARANDDHAAIFLNEKNLAFHLGGHVNHSIWWKNLSPDGGDKPTGELAAAIDDAFGSFDKFRAQFSAAANGLQGSGWAVLGYDTLGSRLLTFQLYDQQANVPLGIIPLLQVDMWEHAFYLQYKNVKADYVKAFWNVVNWAE.

His2, His50, Asp134, and His138 together coordinate Mn(2+).

This sequence belongs to the iron/manganese superoxide dismutase family. The cofactor is Mn(2+).

It carries out the reaction 2 superoxide + 2 H(+) = H2O2 + O2. Its function is as follows. Destroys superoxide anion radicals which are normally produced within the cells and which are toxic to biological systems. This Mycobacterium scrofulaceum protein is Superoxide dismutase [Mn] (sodA).